Here is a 1360-residue protein sequence, read N- to C-terminus: DNA-directed RNA polymerase subunit beta (1360 aa).

The protein belongs to the RNA polymerase beta chain family. As to quaternary structure, the RNAP catalytic core consists of 2 alpha, 1 beta, 1 beta' and 1 omega subunit. When a sigma factor is associated with the core the holoenzyme is formed, which can initiate transcription.

The catalysed reaction is RNA(n) + a ribonucleoside 5'-triphosphate = RNA(n+1) + diphosphate. Its function is as follows. DNA-dependent RNA polymerase catalyzes the transcription of DNA into RNA using the four ribonucleoside triphosphates as substrates. This is DNA-directed RNA polymerase subunit beta from Caulobacter sp. (strain K31).